Reading from the N-terminus, the 259-residue chain is tRNA (guanine-N(7)-)-methyltransferase (259 aa).

The segment at 1–74 (MGHHGQMHAQ…PAEDPDRPGP (74 aa)) is disordered. The S-adenosyl-L-methionine site is built by Glu91, Glu116, Asn143, and Asp166. The active site involves Asp166. Substrate is bound by residues Lys170, Asp202, and 238 to 241 (TKYE).

Belongs to the class I-like SAM-binding methyltransferase superfamily. TrmB family.

The enzyme catalyses guanosine(46) in tRNA + S-adenosyl-L-methionine = N(7)-methylguanosine(46) in tRNA + S-adenosyl-L-homocysteine. It functions in the pathway tRNA modification; N(7)-methylguanine-tRNA biosynthesis. In terms of biological role, catalyzes the formation of N(7)-methylguanine at position 46 (m7G46) in tRNA. The polypeptide is tRNA (guanine-N(7)-)-methyltransferase (Mycobacterium avium (strain 104)).